A 151-amino-acid chain; its full sequence is Probable cGMP 3',5'-cyclic phosphodiesterase subunit delta (151 aa).

It belongs to the PDE6D/unc-119 family. Interacts with Pde6.

The protein resides in the nucleus. It is found in the cytoplasm. This chain is Probable cGMP 3',5'-cyclic phosphodiesterase subunit delta, found in Culex quinquefasciatus (Southern house mosquito).